We begin with the raw amino-acid sequence, 220 residues long: Translation initiation factor 6 (220 aa).

The protein belongs to the eIF-6 family.

Its function is as follows. Binds to the 50S ribosomal subunit and prevents its association with the 30S ribosomal subunit to form the 70S initiation complex. In Pyrobaculum arsenaticum (strain DSM 13514 / JCM 11321 / PZ6), this protein is Translation initiation factor 6.